The chain runs to 496 residues: UDP-glycosyltransferase 73C2 (496 aa).

UDP-alpha-D-glucose is bound by residues serine 297, 357 to 359 (SPQ), 374 to 382 (HCGWNSTLE), and 396 to 399 (FGDQ).

This sequence belongs to the UDP-glycosyltransferase family.

The polypeptide is UDP-glycosyltransferase 73C2 (UGT73C2) (Arabidopsis thaliana (Mouse-ear cress)).